Consider the following 329-residue polypeptide: Probable allantoicase (329 aa).

The protein belongs to the allantoicase family.

The enzyme catalyses allantoate + H2O = (S)-ureidoglycolate + urea. It participates in nitrogen metabolism; (S)-allantoin degradation; (S)-ureidoglycolate from allantoate (aminidohydrolase route): step 1/1. The chain is Probable allantoicase from Nocardia farcinica (strain IFM 10152).